We begin with the raw amino-acid sequence, 104 residues long: Late embryogenis abundant protein 41 (104 aa).

The transit peptide at 1-31 (MAARSLSGAVKSLCSAASGSLSCSIVLRRSY) directs the protein to the mitochondrion.

The protein belongs to the LEA type 3 family.

It is found in the mitochondrion. The chain is Late embryogenis abundant protein 41 from Arabidopsis thaliana (Mouse-ear cress).